The following is a 127-amino-acid chain: Protein ApaG (127 aa).

Positions 3 to 127 constitute an ApaG domain; sequence DADVYAISVE…FVLAIPRTLH (125 aa).

This is Protein ApaG from Stenotrophomonas maltophilia (strain K279a).